The following is a 196-amino-acid chain: Holliday junction branch migration complex subunit RuvA (196 aa).

The segment at Met1–His63 is domain I. The segment at Thr64–Thr142 is domain II. Positions Ala143–Thr146 are flexible linker. The segment at Ala147–Lys196 is domain III.

The protein belongs to the RuvA family. Homotetramer. Forms an RuvA(8)-RuvB(12)-Holliday junction (HJ) complex. HJ DNA is sandwiched between 2 RuvA tetramers; dsDNA enters through RuvA and exits via RuvB. An RuvB hexamer assembles on each DNA strand where it exits the tetramer. Each RuvB hexamer is contacted by two RuvA subunits (via domain III) on 2 adjacent RuvB subunits; this complex drives branch migration. In the full resolvosome a probable DNA-RuvA(4)-RuvB(12)-RuvC(2) complex forms which resolves the HJ.

It is found in the cytoplasm. The RuvA-RuvB-RuvC complex processes Holliday junction (HJ) DNA during genetic recombination and DNA repair, while the RuvA-RuvB complex plays an important role in the rescue of blocked DNA replication forks via replication fork reversal (RFR). RuvA specifically binds to HJ cruciform DNA, conferring on it an open structure. The RuvB hexamer acts as an ATP-dependent pump, pulling dsDNA into and through the RuvAB complex. HJ branch migration allows RuvC to scan DNA until it finds its consensus sequence, where it cleaves and resolves the cruciform DNA. This chain is Holliday junction branch migration complex subunit RuvA, found in Streptococcus thermophilus (strain CNRZ 1066).